A 200-amino-acid chain; its full sequence is Ciliary microtubule inner protein 2C (200 aa).

It belongs to the CIMIP2 family. In terms of assembly, microtubule inner protein component of sperm flagellar doublet microtubules.

It is found in the cytoplasm. The protein resides in the cytoskeleton. Its subcellular location is the cilium axoneme. The protein localises to the flagellum axoneme. Its function is as follows. Microtubule inner protein (MIP) part of the dynein-decorated doublet microtubules (DMTs) in cilia axoneme, which is required for motile cilia beating. Binds to the intra-tubulin interfaces. The chain is Ciliary microtubule inner protein 2C (Cimip2c) from Mus musculus (Mouse).